The following is a 315-amino-acid chain: Heme oxygenase 2 (315 aa).

Residues 1 to 12 (MSSEVETSEGVD) are compositionally biased toward acidic residues. Residues 1–28 (MSSEVETSEGVDESEKNSMAPEKENHTK) form a disordered region. An N-acetylserine modification is found at Ser2. Ser2 carries the post-translational modification Phosphoserine. Topologically, residues 2 to 294 (SSEVETSEGV…TTVAVLRKPS (293 aa)) are cytoplasmic. The span at 13 to 28 (ESEKNSMAPEKENHTK) shows a compositional bias: basic and acidic residues. 4 residues coordinate heme b: His44, Tyr153, Lys198, and Arg202. HRM repeat units lie at residues 263 to 268 (KCPFYA) and 280 to 285 (NCPFQT). S-nitrosocysteine is present on residues Cys264 and Cys281. A helical; Anchor for type IV membrane protein transmembrane segment spans residues 295-315 (LQLILAASVALVAGLLAWYYM).

The protein belongs to the heme oxygenase family. A soluble form arises by proteolytic removal of the membrane anchor. Post-translationally, S-nitrosylated by BLVRB. In terms of tissue distribution, ubiquitous.

The protein resides in the microsome membrane. The protein localises to the endoplasmic reticulum membrane. The enzyme catalyses heme b + 3 reduced [NADPH--hemoprotein reductase] + 3 O2 = biliverdin IXalpha + CO + Fe(2+) + 3 oxidized [NADPH--hemoprotein reductase] + 3 H2O + H(+). Functionally, catalyzes the oxidative cleavage of heme at the alpha-methene bridge carbon, released as carbon monoxide (CO), to generate biliverdin IXalpha, while releasing the central heme iron chelate as ferrous iron. In Mus musculus (Mouse), this protein is Heme oxygenase 2 (Hmox2).